A 198-amino-acid polypeptide reads, in one-letter code: Recombination protein RecR (198 aa).

A C4-type zinc finger spans residues 57 to 72; that stretch reads CSICGNITEEDPCEIC. A Toprim domain is found at 80-175; sequence SIILVVEEPK…TVTRLAHGLS (96 aa).

The protein belongs to the RecR family.

Its function is as follows. May play a role in DNA repair. It seems to be involved in an RecBC-independent recombinational process of DNA repair. It may act with RecF and RecO. The sequence is that of Recombination protein RecR from Enterococcus faecalis (strain ATCC 700802 / V583).